A 656-amino-acid chain; its full sequence is Methionine--tRNA ligase (656 aa).

Residues 13–23 (YYPSGNLHIGH) carry the 'HIGH' region motif. A 'KMSKS' region motif is present at residues 308–312 (KMSKS). Lys-311 provides a ligand contact to ATP. The 101-residue stretch at 556–656 (DFDKVEIKAA…SAIPNGAVIK (101 aa)) folds into the tRNA-binding domain.

Belongs to the class-I aminoacyl-tRNA synthetase family. MetG type 2B subfamily. In terms of assembly, homodimer.

It localises to the cytoplasm. It carries out the reaction tRNA(Met) + L-methionine + ATP = L-methionyl-tRNA(Met) + AMP + diphosphate. Its function is as follows. Is required not only for elongation of protein synthesis but also for the initiation of all mRNA translation through initiator tRNA(fMet) aminoacylation. This chain is Methionine--tRNA ligase, found in Staphylococcus epidermidis (strain ATCC 12228 / FDA PCI 1200).